The following is a 392-amino-acid chain: Pectate lyase 3 (392 aa).

Positions 1-25 are cleaved as a signal peptide; it reads MGIKHCCYILYFTLALVTLLQPVRS. Residue Asn-37 is glycosylated (N-linked (GlcNAc...) asparagine). Cysteines 54 and 71 form a disulfide. Ca(2+) contacts are provided by Asp-194, Asp-218, and Asp-222. Arg-270 is an active-site residue.

This sequence belongs to the polysaccharide lyase 1 family. Amb a subfamily. In terms of assembly, monomer. Ca(2+) is required as a cofactor. In terms of processing, the N-terminus is blocked. In terms of tissue distribution, pollen and flowers.

It catalyses the reaction Eliminative cleavage of (1-&gt;4)-alpha-D-galacturonan to give oligosaccharides with 4-deoxy-alpha-D-galact-4-enuronosyl groups at their non-reducing ends.. The protein operates within glycan metabolism; pectin degradation; 2-dehydro-3-deoxy-D-gluconate from pectin: step 2/5. In terms of biological role, has pectate lyase activity. The polypeptide is Pectate lyase 3 (Ambrosia artemisiifolia (Common ragweed)).